Here is a 409-residue protein sequence, read N- to C-terminus: Tryptophan synthase beta chain (409 aa).

Lysine 104 is modified (N6-(pyridoxal phosphate)lysine).

It belongs to the TrpB family. As to quaternary structure, tetramer of two alpha and two beta chains. It depends on pyridoxal 5'-phosphate as a cofactor.

The catalysed reaction is (1S,2R)-1-C-(indol-3-yl)glycerol 3-phosphate + L-serine = D-glyceraldehyde 3-phosphate + L-tryptophan + H2O. It participates in amino-acid biosynthesis; L-tryptophan biosynthesis; L-tryptophan from chorismate: step 5/5. Its function is as follows. The beta subunit is responsible for the synthesis of L-tryptophan from indole and L-serine. This Trichodesmium erythraeum (strain IMS101) protein is Tryptophan synthase beta chain.